The following is a 412-amino-acid chain: Tryptophan 2,3-dioxygenase (412 aa).

Residues 79–83 (FIVVH), tyrosine 146, and arginine 150 each bind substrate. Histidine 346 contributes to the heme binding site. Substrate is bound at residue threonine 360.

It belongs to the tryptophan 2,3-dioxygenase family. As to quaternary structure, homotetramer. It depends on heme as a cofactor.

The enzyme catalyses L-tryptophan + O2 = N-formyl-L-kynurenine. Its pathway is amino-acid degradation; L-tryptophan degradation via kynurenine pathway; L-kynurenine from L-tryptophan: step 1/2. Heme-dependent dioxygenase that catalyzes the oxidative cleavage of the L-tryptophan (L-Trp) pyrrole ring and converts L-tryptophan to N-formyl-L-kynurenine. Catalyzes the oxidative cleavage of the indole moiety. This Sorangium cellulosum (strain So ce56) (Polyangium cellulosum (strain So ce56)) protein is Tryptophan 2,3-dioxygenase.